The following is a 254-amino-acid chain: RNA polymerase sigma factor SigI8 (254 aa).

Positions Asp-61–Ile-74 match the Polymerase core binding motif. A DNA-binding region (H-T-H motif) is located at residues Tyr-209–Lys-228.

Belongs to the sigma-70 factor family. SigI subfamily. Interacts with RsgI8.

The protein localises to the cytoplasm. Negatively regulated by the anti-sigma-I factor RsgI8. Functionally, sigma factors are initiation factors that promote the attachment of RNA polymerase to specific initiation sites and are then released. The chain is RNA polymerase sigma factor SigI8 from Acetivibrio thermocellus (strain ATCC 27405 / DSM 1237 / JCM 9322 / NBRC 103400 / NCIMB 10682 / NRRL B-4536 / VPI 7372) (Clostridium thermocellum).